The chain runs to 728 residues: Phosphoribosylformylglycinamidine synthase subunit PurL (728 aa).

His42 is an active-site residue. Positions 45 and 84 each coordinate ATP. A Mg(2+)-binding site is contributed by Glu86. Substrate is bound by residues 87-90 (SHNH) and Arg109. Catalysis depends on His88, which acts as the Proton acceptor. A Mg(2+)-binding site is contributed by Asp110. Gln237 serves as a coordination point for substrate. Position 265 (Asp265) interacts with Mg(2+). 309-311 (ESQ) contributes to the substrate binding site. ATP-binding residues include Asp491 and Gly528. Position 529 (Asn529) interacts with Mg(2+). A substrate-binding site is contributed by Ser531.

Belongs to the FGAMS family. Monomer. Part of the FGAM synthase complex composed of 1 PurL, 1 PurQ and 2 PurS subunits.

The protein resides in the cytoplasm. The enzyme catalyses N(2)-formyl-N(1)-(5-phospho-beta-D-ribosyl)glycinamide + L-glutamine + ATP + H2O = 2-formamido-N(1)-(5-O-phospho-beta-D-ribosyl)acetamidine + L-glutamate + ADP + phosphate + H(+). It functions in the pathway purine metabolism; IMP biosynthesis via de novo pathway; 5-amino-1-(5-phospho-D-ribosyl)imidazole from N(2)-formyl-N(1)-(5-phospho-D-ribosyl)glycinamide: step 1/2. Functionally, part of the phosphoribosylformylglycinamidine synthase complex involved in the purines biosynthetic pathway. Catalyzes the ATP-dependent conversion of formylglycinamide ribonucleotide (FGAR) and glutamine to yield formylglycinamidine ribonucleotide (FGAM) and glutamate. The FGAM synthase complex is composed of three subunits. PurQ produces an ammonia molecule by converting glutamine to glutamate. PurL transfers the ammonia molecule to FGAR to form FGAM in an ATP-dependent manner. PurS interacts with PurQ and PurL and is thought to assist in the transfer of the ammonia molecule from PurQ to PurL. This chain is Phosphoribosylformylglycinamidine synthase subunit PurL, found in Campylobacter jejuni subsp. jejuni serotype O:6 (strain 81116 / NCTC 11828).